Consider the following 131-residue polypeptide: DNA-directed RNA polymerases I, II, and III subunit RPABC2 (131 aa).

Residues 1–24 (MDDADYDNDDVGGDDFDDVDEDVD) are disordered.

This sequence belongs to the archaeal Rpo6/eukaryotic RPB6 RNA polymerase subunit family. As to quaternary structure, component of the RNA polymerase I (Pol I), RNA polymerase II (Pol II) and RNA polymerase III (Pol III) complexes consisting of at least 13, 12 and 17 subunits, respectively.

The protein resides in the nucleus. In terms of biological role, DNA-dependent RNA polymerases catalyze the transcription of DNA into RNA using the four ribonucleoside triphosphates as substrates. Common component of RNA polymerases I, II and III which synthesize ribosomal RNA precursors, mRNA precursors and many functional non-coding RNAs, and small RNAs, such as 5S rRNA and tRNAs, respectively. Pol II is the central component of the basal RNA polymerase II transcription machinery. Pols are composed of mobile elements that move relative to each other. In Pol II, Polr2F/RPB6 is part of the clamp element and together with parts of Polr2A/RPB1 and RPB2 forms a pocket to which the Polr2D/RPB4-Polr2G/RPB7 subcomplex binds. This chain is DNA-directed RNA polymerases I, II, and III subunit RPABC2, found in Drosophila melanogaster (Fruit fly).